The following is a 1041-amino-acid chain: Integrator complex subunit 3 (1041 aa).

The residue at position 1 (M1) is an N-acetylmethionine. 3 positions are modified to phosphoserine: S500, S535, and S993. The tract at residues 975–1041 (YEDSSTKPPK…GSSAVGSDSD (67 aa)) is disordered. The span at 1006–1020 (AEEESGSSSASEEED) shows a compositional bias: acidic residues.

Belongs to the Integrator subunit 3 family. As to quaternary structure, component of the Integrator complex, composed of core subunits INTS1, INTS2, INTS3, INTS4, INTS5, INTS6, INTS7, INTS8, INTS9/RC74, INTS10, INTS11/CPSF3L, INTS12, INTS13, INTS14 and INTS15. The core complex associates with protein phosphatase 2A subunits PPP2CA and PPP2R1A, to form the Integrator-PP2A (INTAC) complex. Component of the SOSS complex, composed of SOSS-B (SOSS-B1/NABP2 or SOSS-B2/NABP1), SOSS-A/INTS3 and SOSS-C/INIP. SOSS complexes containing SOSS-B1/NABP2 are more abundant than complexes containing SOSS-B2/NABP1. Interacts with SOSS-B1/NABP2, SOSS-B2/NABP1 and SOSS-C/INIP; the interaction is direct. Interacts with NBN/NBS1.

The protein localises to the nucleus. It is found in the cytoplasm. Its function is as follows. Component of the integrator complex, a multiprotein complex that terminates RNA polymerase II (Pol II) transcription in the promoter-proximal region of genes. The integrator complex provides a quality checkpoint during transcription elongation by driving premature transcription termination of transcripts that are unfavorably configured for transcriptional elongation: the complex terminates transcription by (1) catalyzing dephosphorylation of the C-terminal domain (CTD) of Pol II subunit POLR2A/RPB1 and SUPT5H/SPT5, (2) degrading the exiting nascent RNA transcript via endonuclease activity and (3) promoting the release of Pol II from bound DNA. The integrator complex is also involved in terminating the synthesis of non-coding Pol II transcripts, such as enhancer RNAs (eRNAs), small nuclear RNAs (snRNAs), telomerase RNAs and long non-coding RNAs (lncRNAs). Within the integrator complex, INTS3 is involved in the post-termination step: INTS3 binds INTS7 in the open conformation of integrator complex and prevents the rebinding of Pol II to the integrator after termination cycle. Mediates recruitment of cytoplasmic dynein to the nuclear envelope, probably as component of the integrator complex. In terms of biological role, component of the SOSS complex, a multiprotein complex that functions downstream of the MRN complex to promote DNA repair and G2/M checkpoint. The SOSS complex associates with single-stranded DNA at DNA lesions and influences diverse endpoints in the cellular DNA damage response including cell-cycle checkpoint activation, recombinational repair and maintenance of genomic stability. The SOSS complex is required for efficient homologous recombination-dependent repair of double-strand breaks (DSBs) and ATM-dependent signaling pathways. In the SOSS complex, it is required for the assembly of the complex and for stabilization of the complex at DNA damage sites. This is Integrator complex subunit 3 (Ints3) from Mus musculus (Mouse).